The chain runs to 995 residues: DNA polymerase (995 aa).

It belongs to the DNA polymerase type-B family.

The enzyme catalyses DNA(n) + a 2'-deoxyribonucleoside 5'-triphosphate = DNA(n+1) + diphosphate. This chain is DNA polymerase (RF1), found in Kluyveromyces lactis (strain ATCC 8585 / CBS 2359 / DSM 70799 / NBRC 1267 / NRRL Y-1140 / WM37) (Yeast).